The following is a 313-amino-acid chain: 2-dehydro-3-deoxygluconokinase/2-dehydro-3-deoxygalactonokinase (313 aa).

Substrate-binding positions include 34–38, Tyr-90, 106–108, and Arg-166; these read GSELN and YYR. ATP contacts are provided by residues 164 to 166, 226 to 231, and 255 to 258; these read NIR, KLGSKG, and GAGD. Residues Asp-258 and Asp-294 each coordinate substrate. Catalysis depends on Asp-258, which acts as the Proton acceptor.

Homohexamer; trimer of dimers.

The catalysed reaction is 2-dehydro-3-deoxy-D-gluconate + ATP = 2-dehydro-3-deoxy-6-phospho-D-gluconate + ADP + H(+). It catalyses the reaction 2-dehydro-3-deoxy-D-galactonate + ATP = 2-dehydro-3-deoxy-6-phospho-D-galactonate + ADP + H(+). Its pathway is carbohydrate acid metabolism; 2-dehydro-3-deoxy-D-gluconate degradation; D-glyceraldehyde 3-phosphate and pyruvate from 2-dehydro-3-deoxy-D-gluconate: step 1/2. In terms of biological role, involved in the degradation of glucose and galactose via the semi-phosphorylative Entner-Doudoroff pathway. Catalyzes the phosphorylation of 2-keto-3-deoxygluconate (KDG) and 2-keto-3-deoxygalactonate (KDGal) to produce 2-keto-3-deoxy-6-phosphogluconate (KDPG) and 2-keto-3-deoxy-6-phosphogalactonate (KDPGal), respectively. The sequence is that of 2-dehydro-3-deoxygluconokinase/2-dehydro-3-deoxygalactonokinase (kdgK) from Saccharolobus solfataricus (strain ATCC 35092 / DSM 1617 / JCM 11322 / P2) (Sulfolobus solfataricus).